We begin with the raw amino-acid sequence, 371 residues long: Maltose/maltodextrin import ATP-binding protein MalK (371 aa).

Residues 4–234 enclose the ABC transporter domain; that stretch reads VQLQNVTKAW…PADRFVAGFI (231 aa). Position 36–43 (36–43) interacts with ATP; that stretch reads GPSGCGKS.

This sequence belongs to the ABC transporter superfamily. Maltooligosaccharide importer (TC 3.A.1.1.1) family. The complex is composed of two ATP-binding proteins (MalK), two transmembrane proteins (MalG and MalK) and a solute-binding protein (MalE).

It is found in the cell inner membrane. The catalysed reaction is D-maltose(out) + ATP + H2O = D-maltose(in) + ADP + phosphate + H(+). In terms of biological role, part of the ABC transporter complex MalEFGK involved in maltose/maltodextrin import. Responsible for energy coupling to the transport system. This is Maltose/maltodextrin import ATP-binding protein MalK from Escherichia coli O6:H1 (strain CFT073 / ATCC 700928 / UPEC).